The primary structure comprises 133 residues: Putative esterase TV1331 (133 aa).

This sequence belongs to the thioesterase PaaI family.

The protein is Putative esterase TV1331 of Thermoplasma volcanium (strain ATCC 51530 / DSM 4299 / JCM 9571 / NBRC 15438 / GSS1).